We begin with the raw amino-acid sequence, 261 residues long: 3-methyl-2-oxobutanoate hydroxymethyltransferase (261 aa).

The Mg(2+) site is built by Asp-42 and Asp-81. 3-methyl-2-oxobutanoate contacts are provided by residues Asp-42 to Ser-43, Asp-81, and Lys-110. Glu-112 serves as a coordination point for Mg(2+). Catalysis depends on Glu-179, which acts as the Proton acceptor.

The protein belongs to the PanB family. Homodecamer; pentamer of dimers. Mg(2+) is required as a cofactor.

The protein localises to the cytoplasm. The catalysed reaction is 3-methyl-2-oxobutanoate + (6R)-5,10-methylene-5,6,7,8-tetrahydrofolate + H2O = 2-dehydropantoate + (6S)-5,6,7,8-tetrahydrofolate. The protein operates within cofactor biosynthesis; coenzyme A biosynthesis. Its function is as follows. Catalyzes the reversible reaction in which hydroxymethyl group from 5,10-methylenetetrahydrofolate is transferred onto alpha-ketoisovalerate to form ketopantoate. This Pyrobaculum islandicum (strain DSM 4184 / JCM 9189 / GEO3) protein is 3-methyl-2-oxobutanoate hydroxymethyltransferase.